We begin with the raw amino-acid sequence, 94 residues long: Small ribosomal subunit protein uS19 (94 aa).

This sequence belongs to the universal ribosomal protein uS19 family.

In terms of biological role, protein S19 forms a complex with S13 that binds strongly to the 16S ribosomal RNA. This chain is Small ribosomal subunit protein uS19, found in Acetivibrio thermocellus (strain ATCC 27405 / DSM 1237 / JCM 9322 / NBRC 103400 / NCIMB 10682 / NRRL B-4536 / VPI 7372) (Clostridium thermocellum).